A 422-amino-acid chain; its full sequence is Serine--tRNA ligase (422 aa).

Position 227–229 (227–229 (TSE)) interacts with L-serine. Residues 258-260 (RRE) and valine 274 contribute to the ATP site. Glutamate 281 contributes to the L-serine binding site. An ATP-binding site is contributed by 345-348 (ELTS). Threonine 380 lines the L-serine pocket.

This sequence belongs to the class-II aminoacyl-tRNA synthetase family. Type-1 seryl-tRNA synthetase subfamily. As to quaternary structure, homodimer. The tRNA molecule binds across the dimer.

It localises to the cytoplasm. It catalyses the reaction tRNA(Ser) + L-serine + ATP = L-seryl-tRNA(Ser) + AMP + diphosphate + H(+). The catalysed reaction is tRNA(Sec) + L-serine + ATP = L-seryl-tRNA(Sec) + AMP + diphosphate + H(+). Its pathway is aminoacyl-tRNA biosynthesis; selenocysteinyl-tRNA(Sec) biosynthesis; L-seryl-tRNA(Sec) from L-serine and tRNA(Sec): step 1/1. Its function is as follows. Catalyzes the attachment of serine to tRNA(Ser). Is also able to aminoacylate tRNA(Sec) with serine, to form the misacylated tRNA L-seryl-tRNA(Sec), which will be further converted into selenocysteinyl-tRNA(Sec). The chain is Serine--tRNA ligase from Thermobifida fusca (strain YX).